We begin with the raw amino-acid sequence, 508 residues long: Photosystem II CP47 reaction center protein (508 aa).

The next 6 membrane-spanning stretches (helical) occupy residues 21 to 36 (SVHI…WAGS), 101 to 115 (IVFS…IWHW), 140 to 156 (GIHL…FGAF), 203 to 218 (IAAG…FHLS), 237 to 252 (VLSS…AFVV), and 457 to 472 (SFAL…HGSR).

It belongs to the PsbB/PsbC family. PsbB subfamily. As to quaternary structure, PSII is composed of 1 copy each of membrane proteins PsbA, PsbB, PsbC, PsbD, PsbE, PsbF, PsbH, PsbI, PsbJ, PsbK, PsbL, PsbM, PsbT, PsbX, PsbY, PsbZ, Psb30/Ycf12, at least 3 peripheral proteins of the oxygen-evolving complex and a large number of cofactors. It forms dimeric complexes. The cofactor is Binds multiple chlorophylls. PSII binds additional chlorophylls, carotenoids and specific lipids..

The protein resides in the plastid. It localises to the chloroplast thylakoid membrane. Functionally, one of the components of the core complex of photosystem II (PSII). It binds chlorophyll and helps catalyze the primary light-induced photochemical processes of PSII. PSII is a light-driven water:plastoquinone oxidoreductase, using light energy to abstract electrons from H(2)O, generating O(2) and a proton gradient subsequently used for ATP formation. In Draba nemorosa (Woodland whitlowgrass), this protein is Photosystem II CP47 reaction center protein.